A 258-amino-acid chain; its full sequence is MLKTRIIPCLDVKDGRVVKGVQFLELRDAGDPVESAKAYDAAGADELCFLDITASHEARGTLLDVVSRTAEACFMPLTVGGGVRTVADVRTLLLAGADKVGINTAAVKNPDFVAEAAEKFGDQCIVVAIDAKRVSGPDEAARWEIFTHGGRNPTGIDAVEFARTVSERGAGELLVTSMDKDGTRSGYDIALTRAIADAVRVPVIASGGVGGLDDLVAGVRDGGASAVLAASIFHFGHHTVGEAKAHMAAAGLAMRLDP.

Catalysis depends on residues aspartate 11 and aspartate 130.

It belongs to the HisA/HisF family. Heterodimer of HisH and HisF.

The protein resides in the cytoplasm. It catalyses the reaction 5-[(5-phospho-1-deoxy-D-ribulos-1-ylimino)methylamino]-1-(5-phospho-beta-D-ribosyl)imidazole-4-carboxamide + L-glutamine = D-erythro-1-(imidazol-4-yl)glycerol 3-phosphate + 5-amino-1-(5-phospho-beta-D-ribosyl)imidazole-4-carboxamide + L-glutamate + H(+). It functions in the pathway amino-acid biosynthesis; L-histidine biosynthesis; L-histidine from 5-phospho-alpha-D-ribose 1-diphosphate: step 5/9. Functionally, IGPS catalyzes the conversion of PRFAR and glutamine to IGP, AICAR and glutamate. The HisF subunit catalyzes the cyclization activity that produces IGP and AICAR from PRFAR using the ammonia provided by the HisH subunit. The chain is Imidazole glycerol phosphate synthase subunit HisF from Methylorubrum extorquens (strain PA1) (Methylobacterium extorquens).